Reading from the N-terminus, the 294-residue chain is Beta-lactamase (294 aa).

The first 30 residues, 1-30, serve as a signal peptide directing secretion; the sequence is MKHSSLRRSLLLAGITLPLVSFALPAWANA. The active-site Acyl-ester intermediate is Ser75. 239-241 contributes to the substrate binding site; it reads KTG.

Belongs to the class-A beta-lactamase family.

It carries out the reaction a beta-lactam + H2O = a substituted beta-amino acid. The sequence is that of Beta-lactamase (blaA) from Yersinia enterocolitica.